Here is a 264-residue protein sequence, read N- to C-terminus: MLAQQQPPTPTPTPQQSQPQPQPQPQPQQMSQSRKSKSKKKQSYYDEEVRTLPSGAPVDFGHGKKSTSKPKSKSKPASSSTTNFKLTASPSLPSGAKPNFQPYKSTSPSPPPPPPPSTQPSTSTSTSPTPRTSTGNKNHHNRHQSNHSDYDNDHPQLSLPNGKKPNFFNNNNNDKKFSTIPFDSSINLIRKQYNNPNTKAIKEKKLDNNNNNNSSNNSNNSNNSNSAYYAGSSFHSSPDALNLPKPSFKSNNGSPRQSSGLRDY.

2 disordered regions span residues 1–180 and 193–264; these read MLAQ…FSTI and YNNP…LRDY. Residues 63-74 show a composition bias toward basic residues; that stretch reads GKKSTSKPKSKS. The segment covering 83–92 has biased composition (polar residues); the sequence is NFKLTASPSL. A compositionally biased stretch (pro residues) spans 108–118; it reads PSPPPPPPPST. 3 stretches are compositionally biased toward low complexity: residues 119–134, 161–172, and 208–226; these read QPSTSTSTSPTPRTST, NGKKPNFFNNNN, and NNNNNNSSNNSNNSNNSNS. The segment covering 248–264 has biased composition (polar residues); that stretch reads FKSNNGSPRQSSGLRDY.

This sequence belongs to the EDC family.

The protein resides in the cytoplasm. In terms of biological role, mRNA-binding protein which stimulates mRNA decapping. This Candida albicans (strain SC5314 / ATCC MYA-2876) (Yeast) protein is Enhancer of mRNA-decapping protein 1 (EDC1).